A 557-amino-acid chain; its full sequence is TGF-beta receptor type-2 (557 aa).

The N-terminal stretch at 1 to 23 (MPPRLRPLLLRVSLWVLVGSSSP) is a signal peptide. Over 24–155 (ALLHDRSKEN…KPEEKDEISK (132 aa)) the chain is Extracellular. Cystine bridges form between Cys41/Cys74, Cys44/Cys61, Cys51/Cys57, Cys67/Cys91, Cys111/Cys126, and Cys128/Cys133. Residues Asn62 and Asn84 are each glycosylated (N-linked (GlcNAc...) asparagine). The chain crosses the membrane as a helical span at residues 156–176 (VTIISLVPLLVISVAVIVIFY). Residues 177–557 (AYRTHKKRKL…PEDGSVTTAK (381 aa)) are Cytoplasmic-facing. The Protein kinase domain occupies 234–537 (IELDIVVGKG…FSEFKHHDKL (304 aa)). Residues 240 to 248 (VGKGRFAEV) and Lys267 each bind ATP. The active-site Proton acceptor is Asp369.

The protein belongs to the protein kinase superfamily. TKL Ser/Thr protein kinase family. TGFB receptor subfamily. Heterohexamer; TGFB1, TGFB2 and TGFB3 homodimeric ligands assemble a functional receptor composed of two TGFBR1 and TGFBR2 heterodimers to form a ligand-receptor heterohexamer. Requires Mg(2+) as cofactor. Mn(2+) is required as a cofactor. Phosphorylated on a Ser/Thr residue in the cytoplasmic domain. As to expression, detected at low levels in embryonic heart, brain and lung. Detected at high levels in hatchling heart and lung.

The protein resides in the cell membrane. Its subcellular location is the membrane raft. It carries out the reaction L-threonyl-[receptor-protein] + ATP = O-phospho-L-threonyl-[receptor-protein] + ADP + H(+). The enzyme catalyses L-seryl-[receptor-protein] + ATP = O-phospho-L-seryl-[receptor-protein] + ADP + H(+). Transmembrane serine/threonine kinase forming with the TGF-beta type I serine/threonine kinase receptor, TGFBR1, the non-promiscuous receptor for the TGF-beta cytokines TGFB1, TGFB2 and TGFB3. Transduces the TGFB1, TGFB2 and TGFB3 signal from the cell surface to the cytoplasm and is thus regulating a plethora of physiological and pathological processes including cell cycle arrest in epithelial and hematopoietic cells, control of mesenchymal cell proliferation and differentiation, wound healing, extracellular matrix production, immunosuppression and carcinogenesis. The formation of the receptor complex composed of 2 TGFBR1 and 2 TGFBR2 molecules symmetrically bound to the cytokine dimer results in the phosphorylation and the activation of TGFRB1 by the constitutively active TGFBR2. Activated TGFBR1 phosphorylates SMAD2 which dissociates from the receptor and interacts with SMAD4. The SMAD2-SMAD4 complex is subsequently translocated to the nucleus where it modulates the transcription of the TGF-beta-regulated genes. This constitutes the canonical SMAD-dependent TGF-beta signaling cascade. Also involved in non-canonical, SMAD-independent TGF-beta signaling pathways. This Gallus gallus (Chicken) protein is TGF-beta receptor type-2 (TGFBR2).